A 472-amino-acid chain; its full sequence is 3-isopropylmalate dehydratase large subunit (472 aa).

[4Fe-4S] cluster-binding residues include Cys350, Cys411, and Cys414.

The protein belongs to the aconitase/IPM isomerase family. LeuC type 1 subfamily. As to quaternary structure, heterodimer of LeuC and LeuD. [4Fe-4S] cluster serves as cofactor.

It carries out the reaction (2R,3S)-3-isopropylmalate = (2S)-2-isopropylmalate. It participates in amino-acid biosynthesis; L-leucine biosynthesis; L-leucine from 3-methyl-2-oxobutanoate: step 2/4. In terms of biological role, catalyzes the isomerization between 2-isopropylmalate and 3-isopropylmalate, via the formation of 2-isopropylmaleate. The polypeptide is 3-isopropylmalate dehydratase large subunit (Alcanivorax borkumensis (strain ATCC 700651 / DSM 11573 / NCIMB 13689 / SK2)).